Here is a 509-residue protein sequence, read N- to C-terminus: 2-isopropylmalate synthase (509 aa).

The Pyruvate carboxyltransferase domain maps to 5–267; it reads IQIFDTTLRD…QTALNLEETK (263 aa). Mn(2+)-binding residues include Asp-14, His-202, His-204, and Asn-238. The segment at 391 to 509 is regulatory domain; that stretch reads KLETLQLQYV…AAENVEKVGN (119 aa).

The protein belongs to the alpha-IPM synthase/homocitrate synthase family. LeuA type 1 subfamily. In terms of assembly, homodimer. It depends on Mn(2+) as a cofactor.

The protein localises to the cytoplasm. It catalyses the reaction 3-methyl-2-oxobutanoate + acetyl-CoA + H2O = (2S)-2-isopropylmalate + CoA + H(+). It participates in amino-acid biosynthesis; L-leucine biosynthesis; L-leucine from 3-methyl-2-oxobutanoate: step 1/4. Its function is as follows. Catalyzes the condensation of the acetyl group of acetyl-CoA with 3-methyl-2-oxobutanoate (2-ketoisovalerate) to form 3-carboxy-3-hydroxy-4-methylpentanoate (2-isopropylmalate). The sequence is that of 2-isopropylmalate synthase from Staphylococcus aureus (strain bovine RF122 / ET3-1).